The primary structure comprises 756 residues: 5-methyltetrahydropteroyltriglutamate--homocysteine methyltransferase (756 aa).

5-methyltetrahydropteroyltri-L-glutamate-binding positions include 16 to 19 and lysine 112; that span reads RELK. Residues 432–434 and glutamate 485 contribute to the L-homocysteine site; that span reads IGS. L-methionine is bound by residues 432 to 434 and glutamate 485; that span reads IGS. Residues 516–517 and tryptophan 562 contribute to the 5-methyltetrahydropteroyltri-L-glutamate site; that span reads RC. Aspartate 600 serves as a coordination point for L-homocysteine. Position 600 (aspartate 600) interacts with L-methionine. 5-methyltetrahydropteroyltri-L-glutamate is bound at residue glutamate 606. The Zn(2+) site is built by histidine 642, cysteine 644, and glutamate 666. Histidine 695 (proton donor) is an active-site residue. Cysteine 727 is a Zn(2+) binding site.

The protein belongs to the vitamin-B12 independent methionine synthase family. It depends on Zn(2+) as a cofactor.

The enzyme catalyses 5-methyltetrahydropteroyltri-L-glutamate + L-homocysteine = tetrahydropteroyltri-L-glutamate + L-methionine. The protein operates within amino-acid biosynthesis; L-methionine biosynthesis via de novo pathway; L-methionine from L-homocysteine (MetE route): step 1/1. Catalyzes the transfer of a methyl group from 5-methyltetrahydrofolate to homocysteine resulting in methionine formation. This Haemophilus influenzae (strain PittEE) protein is 5-methyltetrahydropteroyltriglutamate--homocysteine methyltransferase.